A 134-amino-acid chain; its full sequence is ATP synthase epsilon chain, chloroplastic (134 aa).

It belongs to the ATPase epsilon chain family. As to quaternary structure, F-type ATPases have 2 components, CF(1) - the catalytic core - and CF(0) - the membrane proton channel. CF(1) has five subunits: alpha(3), beta(3), gamma(1), delta(1), epsilon(1). CF(0) has three main subunits: a, b and c.

It localises to the plastid. It is found in the chloroplast thylakoid membrane. In terms of biological role, produces ATP from ADP in the presence of a proton gradient across the membrane. The chain is ATP synthase epsilon chain, chloroplastic from Liriodendron tulipifera (Tuliptree).